The following is a 506-amino-acid chain: Protein CYCLOPS (506 aa).

2 disordered regions span residues 193 to 223 (TVNS…LDNP) and 385 to 434 (KENL…RSST). The segment covering 202–219 (TPSQTPTFVSPSSSSTSP) has biased composition (low complexity). A compositionally biased stretch (basic and acidic residues) spans 385–394 (KENLKDDRKK). A Nuclear localization signal motif is present at residues 415-418 (KKRR). Residues 422–432 (SRKMAEAKERS) show a composition bias toward basic and acidic residues. Residues 441 to 506 (IQVVLKRCET…IERIVSDTNT (66 aa)) adopt a coiled-coil conformation.

The protein belongs to the CYCLOPS family. In terms of tissue distribution, highly epressed in roots. Expressed at very low levels in leaves, stems and panicles.

The protein resides in the nucleus. Involved in arbuscular mycorrhizal (AM) symbiosis. Required for fungal infection in roots and arbuscule development during AM symbiosis. The sequence is that of Protein CYCLOPS from Oryza sativa subsp. japonica (Rice).